Consider the following 72-residue polypeptide: Translation initiation factor IF-1 2 (72 aa).

Residues 1–72 (MAKEDVIEMQ…TKGRIVFRTK (72 aa)) enclose the S1-like domain.

It belongs to the IF-1 family. As to quaternary structure, component of the 30S ribosomal translation pre-initiation complex which assembles on the 30S ribosome in the order IF-2 and IF-3, IF-1 and N-formylmethionyl-tRNA(fMet); mRNA recruitment can occur at any time during PIC assembly.

The protein localises to the cytoplasm. Functionally, one of the essential components for the initiation of protein synthesis. Stabilizes the binding of IF-2 and IF-3 on the 30S subunit to which N-formylmethionyl-tRNA(fMet) subsequently binds. Helps modulate mRNA selection, yielding the 30S pre-initiation complex (PIC). Upon addition of the 50S ribosomal subunit IF-1, IF-2 and IF-3 are released leaving the mature 70S translation initiation complex. The protein is Translation initiation factor IF-1 2 of Azoarcus sp. (strain BH72).